The chain runs to 2114 residues: Protein CELLULOSE SYNTHASE INTERACTIVE 2 (2114 aa).

ARM repeat units follow at residues 2 to 42 (TSEM…LLGL), 46 to 87 (KKEC…VLCK), 89 to 128 (KNVR…EVSL), 135 to 177 (NVGT…NLCG), 180 to 219 (DGFW…RLIR), 222 to 262 (TSSI…AITS), 265 to 305 (EEAI…SYGT), 354 to 394 (GDTR…SLFG), 396 to 435 (VDLS…NLCK), 479 to 519 (EESR…NLCC), 522 to 561 (EEIR…KLIK), 563 to 595 (ADPS…HVLA), 601 to 640 (EFVT…DLFS), 643 to 682 (KDLC…SLSN), 708 to 750 (AKTN…RVLR), 774 to 816 (SDVF…LLAK), 825 to 865 (HNPF…RFCK), 870 to 910 (LLGR…CAAK), 914 to 953 (TLWA…IQRP), 994 to 1033 (PSNR…KWIA), 1044 to 1083 (PKVV…ALVR), 1087 to 1128 (DKTI…LVQN), 1141 to 1182 (ERVR…RIAD), 1185 to 1225 (DLSK…SLFR), 1227 to 1264 (PEIT…LCEL), 1265 to 1304 (FSSE…ALVK), 1312 to 1353 (RPDI…FLFT), 1355 to 1394 (EGLR…RLLD), 1396 to 1435 (KRFV…KMAK), 1454 to 1494 (ISQL…MVQP), 1496 to 1525 (LLIL…KPMV), 1526 to 1564 (LESL…SLLE), 1566 to 1605 (QRFQ…RSSV), 1606 to 1648 (TWPK…NILR), 1650 to 1689 (NPEH…ENQD), 1690 to 1730 (SSSV…RNPK), 1732 to 1771 (RETK…DISQ), 1772 to 1813 (HEGL…NFAM), 1816 to 1855 (RTSR…SLFS), 1857 to 1898 (HTLQ…TILT), 1901 to 1940 (PKLR…TLRQ), and 1949 to 1993 (TARS…CLPG). In terms of domain architecture, C2 spans 1974 to 2087 (SPAPSSFHER…LSEGSYSGIF (114 aa)).

Associates with cellulase synthase (CESA) complexes. Binds to cortical microtubules.

The protein localises to the cell membrane. Its subcellular location is the cytoplasm. The protein resides in the cytoskeleton. Regulator of the microtubular cytoskeleton. Microtubule-associated protein involved in the association of cellulase synthase (CESA) complexes (CSCs) and cortical microtubules. Promotes dynamics of CSCs in the plasma membrane. Regulates primary cell wall biosynthesis and cellulose microfibrils organization. This Arabidopsis thaliana (Mouse-ear cress) protein is Protein CELLULOSE SYNTHASE INTERACTIVE 2.